A 565-amino-acid chain; its full sequence is Zinc finger protein 512 (565 aa).

Residues 1–30 (MSSRLGAVPATSGPTTFKQQRSTRIVGAKN) form a disordered region. Over residues 12–23 (SGPTTFKQQRST) the composition is skewed to polar residues. Residues lysine 18 and lysine 83 each participate in a glycyl lysine isopeptide (Lys-Gly) (interchain with G-Cter in SUMO2) cross-link. Positions 85-147 (AATSHVEGSG…QARRIRKEPP (63 aa)) are disordered. Basic residues predominate over residues 118–129 (KKHKLYGRKQRP). The C2H2-type 1 zinc-finger motif lies at 196–219 (FTCHHCGKQLRSLAGMKYHVMANH). A Glycyl lysine isopeptide (Lys-Gly) (interchain with G-Cter in SUMO2) cross-link involves residue lysine 226. A C2H2-type 2 zinc finger spans residues 286 to 309 (LKCHHCGKPYRSKAGLAYHLRSEH). Lysine 332 is covalently cross-linked (Glycyl lysine isopeptide (Lys-Gly) (interchain with G-Cter in SUMO2)). The segment at 405 to 429 (IQCPNQGCEAVYSSVSGLKAHLGSC) adopts a C2H2-type 3; atypical zinc-finger fold. The C2H2-type 4 zinc-finger motif lies at 439-462 (YKCLLCQKEFVSESGVKYHINSVH). The span at 484–493 (KQRQQEEEKR) shows a compositional bias: basic and acidic residues. The tract at residues 484-565 (KQRQQEEEKR…PKTNHKRGRK (82 aa)) is disordered. Residues 494–507 (RQQHRSRRSLRRRQ) are compositionally biased toward basic residues. Positions 522-531 (VGKDQRRNEE) are enriched in basic and acidic residues. Residues 554–565 (KPPKTNHKRGRK) show a composition bias toward basic residues.

Belongs to the krueppel C2H2-type zinc-finger protein family.

The protein localises to the nucleus. In terms of biological role, may be involved in transcriptional regulation. This Macaca fascicularis (Crab-eating macaque) protein is Zinc finger protein 512 (ZNF512).